Consider the following 249-residue polypeptide: MIILKNENEIDLMRKAGKILGETLNLLKEKVRPGITTTELDRIAEEFITKHGATPSFKGLYGFPASLCISVNNQVIHGFPGSYELKDGDIVSIDCGVCLNGFHSDAARTFGVGNISEEAEKLIRITEESFFKGIEKAYVDNRLTDISNEIQQYVEANGFSVVRDFVGHGIGRKVHEDPEVPNFGRPGRGPKLMAGMVLAIEPMVNMGSYRVKTLDDGWTVVTADGKLSAHYENTVAILPNGPEILTLIK.

H77 lines the substrate pocket. A divalent metal cation is bound by residues D94, D105, and H168. H175 is a binding site for substrate. Residues E201 and E232 each contribute to the a divalent metal cation site.

Belongs to the peptidase M24A family. Methionine aminopeptidase type 1 subfamily. As to quaternary structure, monomer. It depends on Co(2+) as a cofactor. Zn(2+) serves as cofactor. Requires Mn(2+) as cofactor. Fe(2+) is required as a cofactor.

It catalyses the reaction Release of N-terminal amino acids, preferentially methionine, from peptides and arylamides.. Functionally, removes the N-terminal methionine from nascent proteins. The N-terminal methionine is often cleaved when the second residue in the primary sequence is small and uncharged (Met-Ala-, Cys, Gly, Pro, Ser, Thr, or Val). Requires deformylation of the N(alpha)-formylated initiator methionine before it can be hydrolyzed. The sequence is that of Methionine aminopeptidase from Clostridium perfringens (strain 13 / Type A).